Here is a 305-residue protein sequence, read N- to C-terminus: Nucleotide-binding protein Mjls_2437 (305 aa).

28 to 35 (GLSGAGRG) contacts ATP. A GTP-binding site is contributed by 79–82 (DVRS).

This sequence belongs to the RapZ-like family.

Functionally, displays ATPase and GTPase activities. The polypeptide is Nucleotide-binding protein Mjls_2437 (Mycobacterium sp. (strain JLS)).